The following is a 92-amino-acid chain: Small archaeal modifier protein 3 (92 aa).

Glycyl lysine isopeptide (Lys-Gly) (interchain with G-Cter in SAMP3) cross-links involve residues Lys-18, Lys-55, and Lys-62. A Glycyl adenylate; alternate modification is found at Gly-92. Residue Gly-92 forms a Glycyl lysine isopeptide (Gly-Lys) (interchain with K-? in acceptor proteins); alternate linkage.

Monomer. In terms of processing, the C-terminal glycine is likely acyl-adenylated (-COAMP) by UbaA.

Functionally, functions as a protein modifier covalently attached to lysine residues of substrate proteins. The protein modification process is termed sampylation and involves the formation of an isopeptide bond between the SAMP3 C-terminal glycine carboxylate and the epsilon-amino group of lysine residues on target proteins. Seems to be able to form polymeric chains with itself at Lys-18, Lys-55 and Lys-62, similar to ubiquitin and other ubiquitin-like proteins. SAMP3 appears not to serve as a proteolytic signal in the cell to target proteins for degradation by proteasomes. May regulate molybdenum cofactor (MoCo) biosynthesis by inhibiting the activity of MPT synthase MoaE under aerobic conditions, providing a hierarchy of oxygen use prior to that of alternative electron acceptors such as DMSO. This chain is Small archaeal modifier protein 3 (samp3), found in Haloferax volcanii (strain ATCC 29605 / DSM 3757 / JCM 8879 / NBRC 14742 / NCIMB 2012 / VKM B-1768 / DS2) (Halobacterium volcanii).